The primary structure comprises 303 residues: Indole-3-glycerol phosphate synthase (303 aa).

It belongs to the TrpC family.

It catalyses the reaction 1-(2-carboxyphenylamino)-1-deoxy-D-ribulose 5-phosphate + H(+) = (1S,2R)-1-C-(indol-3-yl)glycerol 3-phosphate + CO2 + H2O. Its pathway is amino-acid biosynthesis; L-tryptophan biosynthesis; L-tryptophan from chorismate: step 4/5. In Acaryochloris marina (strain MBIC 11017), this protein is Indole-3-glycerol phosphate synthase.